A 150-amino-acid chain; its full sequence is MPIVDSGSVAPLSAAEKTKIRSAWAPVYSNYETTGVDILVKFFTSTPAAQEFFPKFKGLTTADQLKKSADVRWHAERIINAVNDAVVSMDDTEKMSMKLGDLSGKHAKSFQVDPQYFKVLAAVIADTVAAGDAGFEKLMSMICILLRSAY.

Residues 11–150 (PLSAAEKTKI…MICILLRSAY (140 aa)) form the Globin domain. Heme b contacts are provided by His74 and His106.

It belongs to the globin family. As to quaternary structure, monomer.

In Petromyzon marinus (Sea lamprey), this protein is Globin-3.